A 935-amino-acid polypeptide reads, in one-letter code: ABC transporter A family member 7 (935 aa).

A run of 7 helical transmembrane segments spans residues 34–54, 338–358, 392–412, 424–444, 454–474, 483–503, and 528–548; these read LIMI…LFDT, IASL…FPVI, FLTI…AIGL, FVFY…VSSV, ASYI…NFLI, WIIV…YELA, and DDVF…AYYI. The segment at 571–591 is disordered; sequence SLRRPSLQRQGSKVSVDMEKP. Residues 613-850 form the ABC transporter domain; it reads IVCDNLKKVY…YGGSYVFTMT (238 aa). Residue 651–658 coordinates ATP; sequence GPNGAGKT.

The protein belongs to the ABC transporter superfamily. ABCA family. CPR flippase (TC 3.A.1.211) subfamily.

The protein localises to the membrane. This chain is ABC transporter A family member 7 (ABCA7), found in Arabidopsis thaliana (Mouse-ear cress).